The primary structure comprises 926 residues: Storkhead-box protein 2 (926 aa).

7 disordered regions span residues 1–32, 338–393, 452–529, 564–586, 633–693, 723–802, and 823–926; these read MKKTRSTTLRRAWPSSDFSDRASDRMRSRSEK, EEEK…DIPG, EMPF…SYID, KEPSSACSLLEPGKTPESMPSYG, VKKL…SLDK, LLKS…VGTM, and TLLT…VTSV. The segment covering 18–32 has biased composition (basic and acidic residues); that stretch reads FSDRASDRMRSRSEK. Basic residues predominate over residues 353-378; sequence HSGRSKKSRTHRKSHGKSRSHSKTRV. Residues 379-393 are compositionally biased toward basic and acidic residues; it reads SKGDPSDGSHLDIPG. Residues 463–472 show a composition bias toward basic residues; sequence SHSKVHRSHS. The span at 473-495 shows a compositional bias: basic and acidic residues; sequence HTQDRRSRNERSNKAKERSRSMD. Residues 518–529 show a composition bias toward polar residues; the sequence is QDDQTPSQSYID. 2 stretches are compositionally biased toward basic and acidic residues: residues 633 to 658 and 684 to 693; these read VKKLSPSERQTPHSSREPVGHKEESP and HSAEPSSLDK. The segment covering 746–769 has biased composition (polar residues); sequence LGTSAAQAMPPSQRQQEPGGNQEA. The segment covering 785 to 799 has biased composition (basic and acidic residues); it reads GANKNAEEEKNRDDV. Composition is skewed to polar residues over residues 847 to 884 and 914 to 926; these read MDSSSITVDSGFNSPRTRESLASNTSSIVESNRRQNPA and KPSNCLQASVTSV.

The polypeptide is Storkhead-box protein 2 (Stox2) (Mus musculus (Mouse)).